Consider the following 199-residue polypeptide: Thymidine kinase (199 aa).

ATP-binding positions include 15–22 and 88–91; these read GSMFSGKS and DEVQ. The active-site Proton acceptor is Glu89. Zn(2+) is bound by residues Cys145, Cys148, Cys183, and His186.

The protein belongs to the thymidine kinase family. As to quaternary structure, homotetramer.

It localises to the cytoplasm. It carries out the reaction thymidine + ATP = dTMP + ADP + H(+). The chain is Thymidine kinase from Staphylococcus epidermidis (strain ATCC 12228 / FDA PCI 1200).